Here is a 245-residue protein sequence, read N- to C-terminus: Thiopurine S-methyltransferase (245 aa).

Position 29–40 (29–40) interacts with S-adenosyl-L-methionine; the sequence is WQDKWVSHKIGF. A substrate-binding site is contributed by F40. K58 carries the N6-acetyllysine modification. S-adenosyl-L-methionine is bound by residues L69, E90, 134-135, and R152; that span reads SI.

It belongs to the class I-like SAM-binding methyltransferase superfamily. TPMT family. Monomer.

It is found in the cytoplasm. The catalysed reaction is S-adenosyl-L-methionine + a thiopurine = S-adenosyl-L-homocysteine + a thiopurine S-methylether.. This Oryctolagus cuniculus (Rabbit) protein is Thiopurine S-methyltransferase (TPMT).